We begin with the raw amino-acid sequence, 274 residues long: NAD kinase (274 aa).

The active-site Proton acceptor is aspartate 50. Residues 50–51 (DG), 126–127 (NE), arginine 152, aspartate 154, 165–170 (TAYNKS), and alanine 189 contribute to the NAD(+) site.

Belongs to the NAD kinase family. A divalent metal cation serves as cofactor.

The protein localises to the cytoplasm. It carries out the reaction NAD(+) + ATP = ADP + NADP(+) + H(+). Involved in the regulation of the intracellular balance of NAD and NADP, and is a key enzyme in the biosynthesis of NADP. Catalyzes specifically the phosphorylation on 2'-hydroxyl of the adenosine moiety of NAD to yield NADP. This chain is NAD kinase, found in Streptococcus gordonii (strain Challis / ATCC 35105 / BCRC 15272 / CH1 / DL1 / V288).